Consider the following 517-residue polypeptide: GMP synthase [glutamine-hydrolyzing] (517 aa).

Residues 11–202 (KIIVLDFGSQ…AFDVCEAKAN (192 aa)) enclose the Glutamine amidotransferase type-1 domain. C88 (nucleophile) is an active-site residue. Catalysis depends on residues H176 and E178. The GMPS ATP-PPase domain occupies 203–392 (WSMNDFIDMQ…LGMPEDLVWR (190 aa)). 230 to 236 (SGGVDSS) lines the ATP pocket.

Homodimer.

It catalyses the reaction XMP + L-glutamine + ATP + H2O = GMP + L-glutamate + AMP + diphosphate + 2 H(+). It participates in purine metabolism; GMP biosynthesis; GMP from XMP (L-Gln route): step 1/1. Functionally, catalyzes the synthesis of GMP from XMP. This Pediococcus pentosaceus (strain ATCC 25745 / CCUG 21536 / LMG 10740 / 183-1w) protein is GMP synthase [glutamine-hydrolyzing].